Consider the following 492-residue polypeptide: Beta-Ala-His dipeptidase (492 aa).

A Zn(2+)-binding site is contributed by His-107. Residue Asp-109 is part of the active site. Asp-140 serves as a coordination point for Zn(2+). Residue Glu-174 is the Proton acceptor of the active site. Glu-175 lines the Zn(2+) pocket. Residue Ser-194 is modified to Phosphoserine. Residues Asp-203 and His-453 each contribute to the Zn(2+) site.

This sequence belongs to the peptidase M20A family. As to quaternary structure, homodimer. Zn(2+) is required as a cofactor. In terms of tissue distribution, detected exclusively in kidney.

It localises to the secreted. The enzyme catalyses Preferential hydrolysis of the beta-Ala-|-His dipeptide (carnosine), and also anserine, Xaa-|-His dipeptides and other dipeptides including homocarnosine.. The catalysed reaction is carnosine + H2O = beta-alanine + L-histidine. It catalyses the reaction anserine + H2O = N(pros)-methyl-L-histidine + beta-alanine. It carries out the reaction L-alanyl-L-histidine + H2O = L-histidine + L-alanine. The enzyme catalyses glycyl-L-histidine + H2O = L-histidine + glycine. The catalysed reaction is L-homocarnosine + H2O = 4-aminobutanoate + L-histidine. Functionally, catalyzes the peptide bond hydrolysis in Xaa-His dipeptides, displaying the highest activity toward carnosine (beta-alanyl-L-histidine) and anserine (beta-alanyl-3-methyl-histidine). The polypeptide is Beta-Ala-His dipeptidase (Cndp1) (Rattus norvegicus (Rat)).